We begin with the raw amino-acid sequence, 327 residues long: MVTPLNIIFAGTPEFAAQHLAALINSEHNIVAVYCPPDKPAGRGKKLTACATKLLAIEHDIIVEQPINFKNEEDQQQLAKYNADIMVVVAYGLLLPEVILNSPRLGCINVHGSILPKWRGAAPIQRSLEAGDKKTGVTIMQMDKGLDTGDMILSAECEIENTDTSASLYEKLANLGPTALVNTLTIMAEPDYQASNHNIAQDDELATYAKKLDKTEAELNWQFSADELHRKIRAYIPWPVAQFTFTESEGKQHRLRIWQASVQEYRGNADPGTIIKADKEGIEVATTSGSLRLEVIQLPGKKALAVKDILNGRSDWFVVGSTINKLG.

Residue 113-116 (SILP) coordinates (6S)-5,6,7,8-tetrahydrofolate.

This sequence belongs to the Fmt family.

The catalysed reaction is L-methionyl-tRNA(fMet) + (6R)-10-formyltetrahydrofolate = N-formyl-L-methionyl-tRNA(fMet) + (6S)-5,6,7,8-tetrahydrofolate + H(+). Attaches a formyl group to the free amino group of methionyl-tRNA(fMet). The formyl group appears to play a dual role in the initiator identity of N-formylmethionyl-tRNA by promoting its recognition by IF2 and preventing the misappropriation of this tRNA by the elongation apparatus. This chain is Methionyl-tRNA formyltransferase, found in Colwellia psychrerythraea (strain 34H / ATCC BAA-681) (Vibrio psychroerythus).